Here is a 426-residue protein sequence, read N- to C-terminus: Putative competence-damage inducible protein (426 aa).

The protein belongs to the CinA family.

The chain is Putative competence-damage inducible protein from Symbiobacterium thermophilum (strain DSM 24528 / JCM 14929 / IAM 14863 / T).